A 1250-amino-acid polypeptide reads, in one-letter code: Minor capsid protein M1249L (1250 aa).

This sequence belongs to the asfivirus M1249L family. In terms of assembly, interacts with the minor capsid protein p17 and with the hexon capsid protein p72 capsomers; these interactions form a rigid zipper structure that stabilizes the capsomers. Interacts with host IRF3.

Its subcellular location is the virion. It localises to the host cytoplasm. Together with the penton and the other minor capsid proteins (p17, p49), forms a complicated network immediately below the outer capsid shell, stabilizing the whole capsid. In addition, blocks IFN-beta transactivation mediated by the cGAS-STING pathway and regulates the transcriptional activity of IFN-beta. Mechanistically, suppresses the phosphorylation of host key adapter protein TBK1 and degrades host IRF3 in the cytoplasm. The protein is Minor capsid protein M1249L of Ornithodoros (relapsing fever ticks).